Reading from the N-terminus, the 145-residue chain is Histone H2B.10 (145 aa).

Residues 1 to 15 (MAKADKKPAEKKPAE) are compositionally biased toward basic and acidic residues. The segment at 1–53 (MAKADKKPAEKKPAEKTPAAEPAAAAEKKPKAGKKLPKEPAGAGDKKKKRSKK) is disordered. K3 is subject to N6-methyllysine. N6-acetyllysine is present on residues K6 and K11. K12 carries the post-translational modification N6,N6-dimethyllysine. An N6-acetyllysine mark is found at K16, K28, and K34. A compositionally biased stretch (low complexity) spans 16–25 (KTPAAEPAAA). At K35 the chain carries N6-acetyllysine; partial. K141 participates in a covalent cross-link: Glycyl lysine isopeptide (Lys-Gly) (interchain with G-Cter in ubiquitin).

This sequence belongs to the histone H2B family. In terms of assembly, the nucleosome is a histone octamer containing two molecules each of H2A, H2B, H3 and H4 assembled in one H3-H4 heterotetramer and two H2A-H2B heterodimers. The octamer wraps approximately 147 bp of DNA. Interacts with ORTH2. Can be acetylated to form H2BK5ac, H2BK10ac, H2BK15ac, H2BK27ac, H2BK33ac and H2BK34ac. Post-translationally, dimethylated to form H2BK11me2. In terms of processing, monoubiquitinated by BRE1 to form H2BK143ub1 and deubiquitinated by UBP26. Required for heterochromatic histone H3 di- and trimethylation at H3K4me. May give a specific tag for epigenetic transcriptional activation.

It localises to the nucleus. It is found in the chromosome. Functionally, core component of nucleosome. Nucleosomes wrap and compact DNA into chromatin, limiting DNA accessibility to the cellular machineries which require DNA as a template. Histones thereby play a central role in transcription regulation, DNA repair, DNA replication and chromosomal stability. DNA accessibility is regulated via a complex set of post-translational modifications of histones, also called histone code, and nucleosome remodeling. This Arabidopsis thaliana (Mouse-ear cress) protein is Histone H2B.10.